Consider the following 509-residue polypeptide: Maturase K (509 aa).

This sequence belongs to the intron maturase 2 family. MatK subfamily.

It localises to the plastid. The protein localises to the chloroplast. Functionally, usually encoded in the trnK tRNA gene intron. Probably assists in splicing its own and other chloroplast group II introns. The sequence is that of Maturase K from Schlumbergera truncata (Thanksgiving cactus).